The sequence spans 481 residues: Keratin, type I cytoskeletal 39 (481 aa).

Residues 1–25 form a disordered region; that stretch reads MDTKGSTVTISSSTPPQNCSGNTNV. Residues 1–90 form a head region; the sequence is MDTKGSTVTI…RCSDGINSHE (90 aa). One can recognise an IF rod domain in the interval 90–401; sequence EKETMQILNE…SLLESLDGRL (312 aa). A coil 1A region spans residues 91–125; sequence KETMQILNERLASYLEKVRMLEGENADLEDKIQEE. The linker 1 stretch occupies residues 126-136; it reads CSKTLPILCPD. A coil 1B region spans residues 137–237; the sequence is YLSYYTTIEQ…HEEEINSLQC (101 aa). Residues 238-253 are linker 12; it reads QLGDRINIEVTAAPSV. Positions 254–397 are coil 2; sequence DLNQILQKMR…ATYRSLLESL (144 aa). The interval 398–481 is tail; the sequence is DGRLPCNPCT…PCYITRPAKV (84 aa).

This sequence belongs to the intermediate filament family. Heterotetramer of two type I and two type II keratins.

May play a role in late hair differentiation. The polypeptide is Keratin, type I cytoskeletal 39 (Krt39) (Rattus norvegicus (Rat)).